We begin with the raw amino-acid sequence, 163 residues long: SsrA-binding protein (163 aa).

The protein belongs to the SmpB family.

It localises to the cytoplasm. Its function is as follows. Required for rescue of stalled ribosomes mediated by trans-translation. Binds to transfer-messenger RNA (tmRNA), required for stable association of tmRNA with ribosomes. tmRNA and SmpB together mimic tRNA shape, replacing the anticodon stem-loop with SmpB. tmRNA is encoded by the ssrA gene; the 2 termini fold to resemble tRNA(Ala) and it encodes a 'tag peptide', a short internal open reading frame. During trans-translation Ala-aminoacylated tmRNA acts like a tRNA, entering the A-site of stalled ribosomes, displacing the stalled mRNA. The ribosome then switches to translate the ORF on the tmRNA; the nascent peptide is terminated with the 'tag peptide' encoded by the tmRNA and targeted for degradation. The ribosome is freed to recommence translation, which seems to be the essential function of trans-translation. This chain is SsrA-binding protein, found in Corynebacterium diphtheriae (strain ATCC 700971 / NCTC 13129 / Biotype gravis).